A 313-amino-acid polypeptide reads, in one-letter code: D-alanine--D-alanine ligase (313 aa).

The 201-residue stretch at 108-308 (KLVWQQTGVP…YSELVVKVLS (201 aa)) folds into the ATP-grasp domain. ATP is bound at residue 138-193 (VAKLGLPLFVKPASEGSSVAVLKVKTADALPAALSEAATHDKIVIVEKSIEGGGEY). Mg(2+) is bound by residues Asp-262, Glu-275, and Asn-277.

It belongs to the D-alanine--D-alanine ligase family. The cofactor is Mg(2+). Mn(2+) serves as cofactor.

The protein localises to the cytoplasm. The enzyme catalyses 2 D-alanine + ATP = D-alanyl-D-alanine + ADP + phosphate + H(+). It participates in cell wall biogenesis; peptidoglycan biosynthesis. Cell wall formation. This Burkholderia ambifaria (strain MC40-6) protein is D-alanine--D-alanine ligase.